We begin with the raw amino-acid sequence, 147 residues long: MKILVDADSCPVKDIVFQVAREYSVKVVVVKDLSHEIDSNYAEVITADQGRDSVDLIIVNNTDKGDIVITQDYGLASLALTKQAIVLHPNGWKFTEENIDGLLLNRHINQQIRQRNGRHTKTPKRKSKDDNNFKNLLKEIIVQMKSS.

This sequence belongs to the UPF0178 family.

This Natranaerobius thermophilus (strain ATCC BAA-1301 / DSM 18059 / JW/NM-WN-LF) protein is UPF0178 protein Nther_1836.